Reading from the N-terminus, the 370-residue chain is Dual-specificity RNA methyltransferase RlmN (370 aa).

Glu-93 serves as the catalytic Proton acceptor. Positions 99-337 (EEGRGTLCVS…VTTVRKTRGD (239 aa)) constitute a Radical SAM core domain. Cys-106 and Cys-343 form a disulfide bridge. 3 residues coordinate [4Fe-4S] cluster: Cys-113, Cys-117, and Cys-120. S-adenosyl-L-methionine-binding positions include 167-168 (GE), Ser-199, 221-223 (SLH), and Asn-300. Cys-343 acts as the S-methylcysteine intermediate in catalysis.

Belongs to the radical SAM superfamily. RlmN family. It depends on [4Fe-4S] cluster as a cofactor.

Its subcellular location is the cytoplasm. The enzyme catalyses adenosine(2503) in 23S rRNA + 2 reduced [2Fe-2S]-[ferredoxin] + 2 S-adenosyl-L-methionine = 2-methyladenosine(2503) in 23S rRNA + 5'-deoxyadenosine + L-methionine + 2 oxidized [2Fe-2S]-[ferredoxin] + S-adenosyl-L-homocysteine. The catalysed reaction is adenosine(37) in tRNA + 2 reduced [2Fe-2S]-[ferredoxin] + 2 S-adenosyl-L-methionine = 2-methyladenosine(37) in tRNA + 5'-deoxyadenosine + L-methionine + 2 oxidized [2Fe-2S]-[ferredoxin] + S-adenosyl-L-homocysteine. Specifically methylates position 2 of adenine 2503 in 23S rRNA and position 2 of adenine 37 in tRNAs. m2A2503 modification seems to play a crucial role in the proofreading step occurring at the peptidyl transferase center and thus would serve to optimize ribosomal fidelity. This is Dual-specificity RNA methyltransferase RlmN from Francisella philomiragia subsp. philomiragia (strain ATCC 25017 / CCUG 19701 / FSC 153 / O#319-036).